The chain runs to 670 residues: Auxin response factor 16 (670 aa).

The segment at residues 120–222 (FAKTLTQSDA…DLCVGIRRAK (103 aa)) is a DNA-binding region (TF-B3). Residues 545-557 (KTQISSGGSNQNG) are compositionally biased toward polar residues. The tract at residues 545-579 (KTQISSGGSNQNGVAGREFSSSDEGSPCSKKVHDA) is disordered. The PB1 domain occupies 584 to 664 (TGHCKVFMES…RRLTILTEQG (81 aa)).

The protein belongs to the ARF family. As to quaternary structure, homodimers and heterodimers.

The protein localises to the nucleus. Its function is as follows. Auxin response factors (ARFs) are transcriptional factors that bind specifically to the DNA sequence 5'-TGTCTC-3' found in the auxin-responsive promoter elements (AuxREs). Could act as transcriptional activator or repressor. Formation of heterodimers with Aux/IAA proteins may alter their ability to modulate early auxin response genes expression. The chain is Auxin response factor 16 (ARF16) from Arabidopsis thaliana (Mouse-ear cress).